The chain runs to 596 residues: Phosphoenolpyruvate carboxykinase [GTP] (596 aa).

Residues Arg77 and 205-207 contribute to the substrate site; that span reads YGG. Mn(2+) contacts are provided by Lys214 and His234. Ser256 serves as a coordination point for substrate. 257-262 contributes to the GTP binding site; the sequence is ACGKTN. The active site involves Cys258. Asp283 contacts Mn(2+). Positions 362 to 388 are disordered; sequence KKGSTEKAAHPNSRFTAPAKNNPAISP. 373–375 serves as a coordination point for substrate; it reads NSR. GTP-binding positions include Arg375, Arg406, and 499-502; that span reads YGDN.

It belongs to the phosphoenolpyruvate carboxykinase [GTP] family. As to quaternary structure, monomer. Mn(2+) serves as cofactor.

The protein localises to the cytoplasm. It catalyses the reaction oxaloacetate + GTP = phosphoenolpyruvate + GDP + CO2. Its pathway is carbohydrate biosynthesis; gluconeogenesis. In terms of biological role, catalyzes the conversion of oxaloacetate (OAA) to phosphoenolpyruvate (PEP), the rate-limiting step in the metabolic pathway that produces glucose from lactate and other precursors derived from the citric acid cycle. This chain is Phosphoenolpyruvate carboxykinase [GTP], found in Anaeromyxobacter dehalogenans (strain 2CP-1 / ATCC BAA-258).